Here is a 97-residue protein sequence, read N- to C-terminus: Glutamyl-tRNA(Gln) amidotransferase subunit C 2 (97 aa).

Belongs to the GatC family. In terms of assembly, heterotrimer of A, B and C subunits.

The enzyme catalyses L-glutamyl-tRNA(Gln) + L-glutamine + ATP + H2O = L-glutaminyl-tRNA(Gln) + L-glutamate + ADP + phosphate + H(+). It carries out the reaction L-aspartyl-tRNA(Asn) + L-glutamine + ATP + H2O = L-asparaginyl-tRNA(Asn) + L-glutamate + ADP + phosphate + 2 H(+). In terms of biological role, allows the formation of correctly charged Asn-tRNA(Asn) or Gln-tRNA(Gln) through the transamidation of misacylated Asp-tRNA(Asn) or Glu-tRNA(Gln) in organisms which lack either or both of asparaginyl-tRNA or glutaminyl-tRNA synthetases. The reaction takes place in the presence of glutamine and ATP through an activated phospho-Asp-tRNA(Asn) or phospho-Glu-tRNA(Gln). The protein is Glutamyl-tRNA(Gln) amidotransferase subunit C 2 (gatC2) of Clostridium acetobutylicum (strain ATCC 824 / DSM 792 / JCM 1419 / IAM 19013 / LMG 5710 / NBRC 13948 / NRRL B-527 / VKM B-1787 / 2291 / W).